The primary structure comprises 181 residues: Transcription termination/antitermination protein NusG (181 aa).

Residues 130–161 (PGEMIRVNDGPFADFNGVVEEVDYEKSRLKVS) enclose the KOW domain.

It belongs to the NusG family. As to quaternary structure, monomer. Interacts with the transcription termination factor Rho and with RNA polymerase.

Its function is as follows. Participates in transcription elongation, termination and antitermination. In the absence of Rho, increases the rate of transcription elongation by the RNA polymerase (RNAP), probably by partially suppressing pausing. In the presence of Rho, modulates most Rho-dependent termination events by interacting with the RNAP to render the complex more susceptible to the termination activity of Rho. May be required to overcome a kinetic limitation of Rho to function at certain terminators. Also involved in ribosomal RNA transcriptional antitermination. This Buchnera aphidicola subsp. Acyrthosiphon pisum (strain APS) (Acyrthosiphon pisum symbiotic bacterium) protein is Transcription termination/antitermination protein NusG.